We begin with the raw amino-acid sequence, 557 residues long: Arginine--tRNA ligase (557 aa).

The 'HIGH' region signature appears at Ala-128–His-138.

Belongs to the class-I aminoacyl-tRNA synthetase family. As to quaternary structure, monomer.

The protein localises to the cytoplasm. The enzyme catalyses tRNA(Arg) + L-arginine + ATP = L-arginyl-tRNA(Arg) + AMP + diphosphate. The polypeptide is Arginine--tRNA ligase (Thiobacillus denitrificans (strain ATCC 25259 / T1)).